Here is a 177-residue protein sequence, read N- to C-terminus: ATP-dependent protease subunit HslV (177 aa).

Residue Thr-7 is part of the active site. Na(+)-binding residues include Ala-162, Cys-165, and Thr-168.

This sequence belongs to the peptidase T1B family. HslV subfamily. As to quaternary structure, a double ring-shaped homohexamer of HslV is capped on each side by a ring-shaped HslU homohexamer. The assembly of the HslU/HslV complex is dependent on binding of ATP.

The protein resides in the cytoplasm. It catalyses the reaction ATP-dependent cleavage of peptide bonds with broad specificity.. Allosterically activated by HslU binding. Its function is as follows. Protease subunit of a proteasome-like degradation complex believed to be a general protein degrading machinery. In Thioalkalivibrio sulfidiphilus (strain HL-EbGR7), this protein is ATP-dependent protease subunit HslV.